A 761-amino-acid polypeptide reads, in one-letter code: DNA topoisomerase 1 (761 aa).

The 138-residue stretch at 6–143 (TALIICEKPS…KRMRFSSLTK (138 aa)) folds into the Toprim domain. Residues E12 and D111 each contribute to the Mg(2+) site. The Topo IA-type catalytic domain occupies 157 to 569 (DYGLVDAGES…EAEKRLRKIL (413 aa)). Residues 196–201 (SVGRVQ) are interaction with DNA. Catalysis depends on Y315, which acts as the O-(5'-phospho-DNA)-tyrosine intermediate. 3 consecutive C4-type zinc fingers follow at residues 600–626 (CPKC…YPEC), 680–706 (CPKC…YPKC), and 721–747 (CPKC…YPKC).

It belongs to the type IA topoisomerase family. In terms of assembly, monomer. Mg(2+) serves as cofactor.

It carries out the reaction ATP-independent breakage of single-stranded DNA, followed by passage and rejoining.. Functionally, releases the supercoiling and torsional tension of DNA, which is introduced during the DNA replication and transcription, by transiently cleaving and rejoining one strand of the DNA duplex. Introduces a single-strand break via transesterification at a target site in duplex DNA. The scissile phosphodiester is attacked by the catalytic tyrosine of the enzyme, resulting in the formation of a DNA-(5'-phosphotyrosyl)-enzyme intermediate and the expulsion of a 3'-OH DNA strand. The free DNA strand then undergoes passage around the unbroken strand, thus removing DNA supercoils. Finally, in the religation step, the DNA 3'-OH attacks the covalent intermediate to expel the active-site tyrosine and restore the DNA phosphodiester backbone. In Methanocaldococcus jannaschii (strain ATCC 43067 / DSM 2661 / JAL-1 / JCM 10045 / NBRC 100440) (Methanococcus jannaschii), this protein is DNA topoisomerase 1.